The chain runs to 451 residues: UPF0210 protein NMC1568 (451 aa).

It belongs to the UPF0210 family. Homodimer.

The sequence is that of UPF0210 protein NMC1568 from Neisseria meningitidis serogroup C / serotype 2a (strain ATCC 700532 / DSM 15464 / FAM18).